Consider the following 326-residue polypeptide: Flap endonuclease 1 (326 aa).

An N-domain region spans residues 1–98 (MGVQFNDSIP…KTREERRKVK (98 aa)). Residues Asp27, Asp80, Glu152, Glu154, Asp173, Asp175, and Asp224 each contribute to the Mg(2+) site. The tract at residues 116–245 (DMQKYAKRIN…KKALTIIKNK (130 aa)) is I-domain. Residues 318–326 (SQTSLDSWF) are interaction with PCNA.

It belongs to the XPG/RAD2 endonuclease family. FEN1 subfamily. In terms of assembly, interacts with PCNA. PCNA stimulates the nuclease activity without altering cleavage specificity. Mg(2+) serves as cofactor.

In terms of biological role, structure-specific nuclease with 5'-flap endonuclease and 5'-3' exonuclease activities involved in DNA replication and repair. During DNA replication, cleaves the 5'-overhanging flap structure that is generated by displacement synthesis when DNA polymerase encounters the 5'-end of a downstream Okazaki fragment. Binds the unpaired 3'-DNA end and kinks the DNA to facilitate 5' cleavage specificity. Cleaves one nucleotide into the double-stranded DNA from the junction in flap DNA, leaving a nick for ligation. Also involved in the base excision repair (BER) pathway. Acts as a genome stabilization factor that prevents flaps from equilibrating into structures that lead to duplications and deletions. Also possesses 5'-3' exonuclease activity on nicked or gapped double-stranded DNA. The polypeptide is Flap endonuclease 1 (Methanococcus aeolicus (strain ATCC BAA-1280 / DSM 17508 / OCM 812 / Nankai-3)).